The chain runs to 728 residues: 1,4-alpha-glucan branching enzyme GlgB (728 aa).

Aspartate 405 acts as the Nucleophile in catalysis. Glutamate 458 functions as the Proton donor in the catalytic mechanism.

This sequence belongs to the glycosyl hydrolase 13 family. GlgB subfamily. Monomer.

The enzyme catalyses Transfers a segment of a (1-&gt;4)-alpha-D-glucan chain to a primary hydroxy group in a similar glucan chain.. It functions in the pathway glycan biosynthesis; glycogen biosynthesis. In terms of biological role, catalyzes the formation of the alpha-1,6-glucosidic linkages in glycogen by scission of a 1,4-alpha-linked oligosaccharide from growing alpha-1,4-glucan chains and the subsequent attachment of the oligosaccharide to the alpha-1,6 position. The polypeptide is 1,4-alpha-glucan branching enzyme GlgB (Escherichia coli O6:K15:H31 (strain 536 / UPEC)).